Reading from the N-terminus, the 466-residue chain is Cysteine--tRNA ligase (466 aa).

Zn(2+) is bound at residue cysteine 27. The 'HIGH' region signature appears at 29-39 (PTVYNFFHIGN). The Zn(2+) site is built by cysteine 207, histidine 232, and glutamate 236. The 'KMSKS' region motif lies at 264 to 268 (KMSKS). ATP is bound at residue lysine 267.

This sequence belongs to the class-I aminoacyl-tRNA synthetase family. In terms of assembly, monomer. Requires Zn(2+) as cofactor.

The protein localises to the cytoplasm. The catalysed reaction is tRNA(Cys) + L-cysteine + ATP = L-cysteinyl-tRNA(Cys) + AMP + diphosphate. In Clostridium beijerinckii (strain ATCC 51743 / NCIMB 8052) (Clostridium acetobutylicum), this protein is Cysteine--tRNA ligase.